The following is a 262-amino-acid chain: Shikimate dehydrogenase (NADP(+)) (262 aa).

Shikimate is bound by residues 13-15 and threonine 59; that span reads SLS. Lysine 63 functions as the Proton acceptor in the catalytic mechanism. NADP(+) is bound at residue aspartate 75. Asparagine 84 and aspartate 99 together coordinate shikimate. Residues 122 to 126, 144 to 149, and methionine 205 each bind NADP(+); these read GAGGA and NRTLEK. Tyrosine 207 lines the shikimate pocket. Residue glycine 228 participates in NADP(+) binding.

The protein belongs to the shikimate dehydrogenase family. As to quaternary structure, homodimer.

It catalyses the reaction shikimate + NADP(+) = 3-dehydroshikimate + NADPH + H(+). It functions in the pathway metabolic intermediate biosynthesis; chorismate biosynthesis; chorismate from D-erythrose 4-phosphate and phosphoenolpyruvate: step 4/7. In terms of biological role, involved in the biosynthesis of the chorismate, which leads to the biosynthesis of aromatic amino acids. Catalyzes the reversible NADPH linked reduction of 3-dehydroshikimate (DHSA) to yield shikimate (SA). This chain is Shikimate dehydrogenase (NADP(+)), found in Ignicoccus hospitalis (strain KIN4/I / DSM 18386 / JCM 14125).